The following is a 395-amino-acid chain: uncharacterized protein (395 aa).

7 helical membrane passes run Leu42 to Ile62, Leu67 to Leu87, Leu97 to Phe117, Ile128 to Pro148, Phe196 to Leu216, Ile241 to Ala261, and Leu281 to Val301.

The protein localises to the cell membrane. This is an uncharacterized protein from Mycoplasma genitalium (strain ATCC 33530 / DSM 19775 / NCTC 10195 / G37) (Mycoplasmoides genitalium).